Here is a 217-residue protein sequence, read N- to C-terminus: Protein-L-isoaspartate O-methyltransferase (217 aa).

Residue serine 65 is part of the active site.

This sequence belongs to the methyltransferase superfamily. L-isoaspartyl/D-aspartyl protein methyltransferase family.

It is found in the cytoplasm. It carries out the reaction [protein]-L-isoaspartate + S-adenosyl-L-methionine = [protein]-L-isoaspartate alpha-methyl ester + S-adenosyl-L-homocysteine. Catalyzes the methyl esterification of L-isoaspartyl residues in peptides and proteins that result from spontaneous decomposition of normal L-aspartyl and L-asparaginyl residues. It plays a role in the repair and/or degradation of damaged proteins. The protein is Protein-L-isoaspartate O-methyltransferase of Methanoregula boonei (strain DSM 21154 / JCM 14090 / 6A8).